We begin with the raw amino-acid sequence, 314 residues long: DNA-directed RNA polymerase subunit alpha (314 aa).

An alpha N-terminal domain (alpha-NTD) region spans residues 1-228 (MIEIEKPKIE…EHLNIFVGLT (228 aa)). An alpha C-terminal domain (alpha-CTD) region spans residues 245-314 (KEKVLEMTIE…ELGLGLRKDD (70 aa)).

This sequence belongs to the RNA polymerase alpha chain family. Homodimer. The RNAP catalytic core consists of 2 alpha, 1 beta, 1 beta' and 1 omega subunit. When a sigma factor is associated with the core the holoenzyme is formed, which can initiate transcription.

It catalyses the reaction RNA(n) + a ribonucleoside 5'-triphosphate = RNA(n+1) + diphosphate. Functionally, DNA-dependent RNA polymerase catalyzes the transcription of DNA into RNA using the four ribonucleoside triphosphates as substrates. This chain is DNA-directed RNA polymerase subunit alpha, found in Bacillus thuringiensis (strain Al Hakam).